Reading from the N-terminus, the 1084-residue chain is Histone deacetylase 4 (1084 aa).

A coiled-coil region spans residues 67–177 (REQQLQQELL…STEVKMKLQE (111 aa)). Residues 118-313 (MLAMKHQQEL…NNSSGSVSAE (196 aa)) form an interaction with MEF2A region. The span at 133-163 (KLERHRQEQELEKQHREQKLQQLKNKEKGKE) shows a compositional bias: basic and acidic residues. 3 disordered regions span residues 133-166 (KLER…ESAV), 206-226 (TQHS…TSYN), and 240-315 (PLRK…AENG). Ser210 is modified (phosphoserine). A Phosphoserine; by CaMK4 and SIK1 modification is found at Ser246. The span at 259–274 (KVAERRSSPLLRRKDG) shows a compositional bias: basic and acidic residues. The segment covering 290 to 312 (SACSSAPGSGPSSPNNSSGSVSA) has biased composition (low complexity). The PxLPxI/L motif; mediates interaction with ANKRA2 and 14-3-3 proteins motif lies at 349-354 (PSLPNI). Residue Ser350 is modified to Phosphoserine. Phosphoserine; by CaMK4 and SIK1 is present on Ser467. Disordered stretches follow at residues 509–531 (PKPS…ELRE), 548–585 (KEAH…QPSE), and 626–646 (PLSR…VQEP). The span at 516 to 531 (RQPESHPEETEEELRE) shows a compositional bias: basic and acidic residues. Residue Lys559 forms a Glycyl lysine isopeptide (Lys-Gly) (interchain with G-Cter in SUMO) linkage. Position 565 is a phosphoserine (Ser565). The segment covering 629 to 641 (RAQSSPASATFPV) has biased composition (polar residues). Ser632 carries the phosphoserine; by CaMK4 modification. Residue Ser633 is modified to Phosphoserine. Residues 655–1084 (GLVYDTLMLK…EEPMEEEPPL (430 aa)) are histone deacetylase. Positions 667, 669, 675, and 751 each coordinate Zn(2+). His803 is an active-site residue. The short motif at 1051–1084 (EEAETVTAMASLSVGVKPAEKRPDEEPMEEEPPL) is the Nuclear export signal element. The segment at 1061–1084 (SLSVGVKPAEKRPDEEPMEEEPPL) is disordered.

Belongs to the histone deacetylase family. HD type 2 subfamily. Homodimer. Homodimerization via its N-terminal domain. Interacts with MEF2A. Interacts with MEF2C and MEF2D. Interacts with AHRR. Interacts with NR2C1. Interacts with HDAC7. Interacts with a 14-3-3 chaperone proteins in a phosphorylation dependent manner. Interacts with 14-3-3 protein YWHAB. Interacts with BTBD14B. Interacts with KDM5B. Interacts with MYOCD. Interacts with MORC2. Interacts (via PxLPxI/L motif) with ANKRA2 (via ankyrin repeats). Interacts with CUL7 (as part of the 3M complex); negatively regulated by ANKRA2. Interacts with EP300 in the presence of TFAP2C. Interacts with HSPA1A and HSPA1B leading to their deacetylation at 'Lys-77'. Interacts with ZBTB7B; the interaction allows the recruitment of HDAC4 on CD8 loci for deacetylation and possible inhibition of CD8 genes expression. Interacts with DHX36. Interacts with SIK3; this interaction leads to HDAC4 retention in the cytoplasm. Interacts with ZNF638. Post-translationally, phosphorylated by CaMK4 at Ser-246, Ser-467 and Ser-632. Phosphorylation at other residues by CaMK2D is required for the interaction with 14-3-3. Phosphorylation at Ser-350, within the PxLPxI/L motif, impairs the binding of ANKRA2 but generates a high-affinity docking site for 14-3-3. In terms of processing, sumoylation on Lys-559 is promoted by the E3 SUMO-protein ligase RANBP2, and prevented by phosphorylation by CaMK4. As to expression, ubiquitous.

Its subcellular location is the nucleus. The protein localises to the cytoplasm. It carries out the reaction N(6)-acetyl-L-lysyl-[histone] + H2O = L-lysyl-[histone] + acetate. Functionally, responsible for the deacetylation of lysine residues on the N-terminal part of the core histones (H2A, H2B, H3 and H4). Histone deacetylation gives a tag for epigenetic repression and plays an important role in transcriptional regulation, cell cycle progression and developmental events. Histone deacetylases act via the formation of large multiprotein complexes. Involved in muscle maturation via its interaction with the myocyte enhancer factors such as MEF2A, MEF2C and MEF2D. Involved in the MTA1-mediated epigenetic regulation of ESR1 expression in breast cancer. Deacetylates HSPA1A and HSPA1B at 'Lys-77' leading to their preferential binding to co-chaperone STUB1. In Homo sapiens (Human), this protein is Histone deacetylase 4.